Here is a 117-residue protein sequence, read N- to C-terminus: Prefoldin subunit beta (117 aa).

The protein belongs to the prefoldin subunit beta family. In terms of assembly, heterohexamer of two alpha and four beta subunits.

The protein resides in the cytoplasm. Molecular chaperone capable of stabilizing a range of proteins. Seems to fulfill an ATP-independent, HSP70-like function in archaeal de novo protein folding. In Methanococcoides burtonii (strain DSM 6242 / NBRC 107633 / OCM 468 / ACE-M), this protein is Prefoldin subunit beta.